The chain runs to 452 residues: UDP-N-acetylmuramoyl-tripeptide--D-alanyl-D-alanine ligase (452 aa).

107–113 (GSSGKTS) lines the ATP pocket.

This sequence belongs to the MurCDEF family. MurF subfamily. Monomer.

It localises to the cytoplasm. The catalysed reaction is D-alanyl-D-alanine + UDP-N-acetyl-alpha-D-muramoyl-L-alanyl-gamma-D-glutamyl-meso-2,6-diaminopimelate + ATP = UDP-N-acetyl-alpha-D-muramoyl-L-alanyl-gamma-D-glutamyl-meso-2,6-diaminopimeloyl-D-alanyl-D-alanine + ADP + phosphate + H(+). It participates in cell wall biogenesis; peptidoglycan biosynthesis. Involved in cell wall formation. Catalyzes the final step in the synthesis of UDP-N-acetylmuramoyl-pentapeptide, the precursor of murein. The polypeptide is UDP-N-acetylmuramoyl-tripeptide--D-alanyl-D-alanine ligase (Escherichia coli (strain K12)).